We begin with the raw amino-acid sequence, 875 residues long: Leucine--tRNA ligase (875 aa).

Positions 43–53 (PYPSGRIHMGH) match the 'HIGH' region motif. The short motif at 633–637 (KMSKS) is the 'KMSKS' region element. Lys636 provides a ligand contact to ATP.

The protein belongs to the class-I aminoacyl-tRNA synthetase family.

Its subcellular location is the cytoplasm. It catalyses the reaction tRNA(Leu) + L-leucine + ATP = L-leucyl-tRNA(Leu) + AMP + diphosphate. This Bartonella bacilliformis (strain ATCC 35685 / KC583 / Herrer 020/F12,63) protein is Leucine--tRNA ligase.